A 252-amino-acid chain; its full sequence is Tabinhibitin 9 (252 aa).

The first 23 residues, Met-1 to Ser-23, serve as a signal peptide directing secretion. A Cell attachment site motif is present at residues Arg-32–Asp-34. The SCP domain maps to Tyr-63–Phe-207.

Belongs to the CRISP family. Expressed in salivary glands.

It is found in the secreted. Its function is as follows. Inhibits platelet aggregation induced by all agonists tested (ADP, arachidonic acid, the thromboxane A2 analog U46619, thrombin, and snake venom snaclecs (TMVA that activates platelet through GPIB, and stejnulxin that specifically acts through GPVI (GP6))). May act by competing with fibrinogen for binding to glycoprotein IIb/IIIa (ITGA2B/ITGB3). This Tabanus yao (Horsefly) protein is Tabinhibitin 9.